We begin with the raw amino-acid sequence, 1433 residues long: Pleckstrin homology domain-containing family H member 1 (1433 aa).

Positions 40–174 form a coiled coil; that stretch reads NIRHLLAERM…QILMLQDKLQ (135 aa). Disordered stretches follow at residues 247–346 and 552–634; these read DKAD…LSPP and SSVP…TSSY. Residues 252–266 show a composition bias toward polar residues; it reads PKSSQDGVDATSTVK. Over residues 279–299 the composition is skewed to basic and acidic residues; that stretch reads MRDRAMGGASDRDHSSDELNS. Positions 308-318 are enriched in low complexity; the sequence is SSSSSSSSSSS. The span at 332-343 shows a compositional bias: pro residues; that stretch reads TPTPKSPPPVSL. Residues 557-567 show a composition bias toward acidic residues; sequence PDDDSGSEDDS. The span at 568–578 shows a compositional bias: low complexity; that stretch reads SSLASLHTSTL. A compositionally biased stretch (polar residues) spans 597–606; it reads VSTSSISSES. PH domains lie at 643-737 and 751-859; these read TLEK…NVLK and KPTA…VAAG. The 155-residue stretch at 896-1050 folds into the MyTH4 domain; it reads FSKEGLRYPL…PSRMEILSIL (155 aa). In terms of domain architecture, FERM spans 1061 to 1392; sequence FSIPVHFMNN…SYINYWTSSL (332 aa).

Functionally, critical component of the guidance pathway underlying endothelial cell migration and blood vessel patterning. Involved in mediating membrane localization of ephrin proteins, which have been shown to provide guidance cues for endothelial cell migration. The sequence is that of Pleckstrin homology domain-containing family H member 1 (plekhh1) from Danio rerio (Zebrafish).